The chain runs to 311 residues: Ribosomal RNA small subunit methyltransferase H (311 aa).

Residues A33 to H35, D53, F80, D101, and Q108 each bind S-adenosyl-L-methionine.

This sequence belongs to the methyltransferase superfamily. RsmH family.

It is found in the cytoplasm. The enzyme catalyses cytidine(1402) in 16S rRNA + S-adenosyl-L-methionine = N(4)-methylcytidine(1402) in 16S rRNA + S-adenosyl-L-homocysteine + H(+). Specifically methylates the N4 position of cytidine in position 1402 (C1402) of 16S rRNA. The chain is Ribosomal RNA small subunit methyltransferase H from Alkaliphilus oremlandii (strain OhILAs) (Clostridium oremlandii (strain OhILAs)).